A 108-amino-acid chain; its full sequence is uncharacterized protein (108 aa).

Positions 1 to 12 (MSNQQKQLQLPS) are enriched in polar residues. Residues 1–22 (MSNQQKQLQLPSASIKKPKEKQ) form a disordered region.

This is an uncharacterized protein from Dictyostelium discoideum (Social amoeba).